A 437-amino-acid chain; its full sequence is GTPase Der (437 aa).

2 consecutive EngA-type G domains span residues 3-168 (PLIA…PESE) and 178-353 (VKLA…RNRS). Residues 9–16 (GRPNVGKS), 56–60 (DTGGY), 120–123 (NKVE), 184–191 (GRPNVGKS), 231–235 (DTAGL), and 296–299 (NKWD) contribute to the GTP site. In terms of domain architecture, KH-like spans 354–437 (RKISTSSLNR…VPISLRFMEK (84 aa)).

The protein belongs to the TRAFAC class TrmE-Era-EngA-EngB-Septin-like GTPase superfamily. EngA (Der) GTPase family. Associates with the 50S ribosomal subunit.

Its function is as follows. GTPase that plays an essential role in the late steps of ribosome biogenesis. The chain is GTPase Der from Chlorobium limicola (strain DSM 245 / NBRC 103803 / 6330).